We begin with the raw amino-acid sequence, 861 residues long: Transcription factor opdJ (861 aa).

Residues 11–37 constitute a DNA-binding region (zn(2)-C6 fungal-type); it reads CSHCSKAKARCDRKVPCSRCVSKQLVC.

It localises to the nucleus. Transcription factor that positively regulates the gene cluster that mediates the biosynthesis of oxopyrrolidines, polyketide-amino acid hybrid compounds with feature structures of tetramic acid. This chain is Transcription factor opdJ, found in Penicillium oxalicum (strain 114-2 / CGMCC 5302) (Penicillium decumbens).